The primary structure comprises 202 residues: MDFVNNDTRQIAKNLLGVKVIYQDTTQTYTGYIVETEAYLGLNDRAAHGYGGKITPKVTSLYKRGGTIYAHVMHTHLLINFVTKSEGIPEGVLIRAIEPEEGLSAMFRNRGKKGYEVTNGPGKWTKAFNIPRAIDGATLNDCRLSIDTKNRKYPKDIIASPRIGIPNKGDWTHKSLRYTVKGNPFVSRMRKSDCMFPEDTWK.

It belongs to the DNA glycosylase MPG family.

The sequence is that of Putative 3-methyladenine DNA glycosylase from Staphylococcus aureus (strain Mu3 / ATCC 700698).